The following is a 494-amino-acid chain: Beta-glucosidase 29 (494 aa).

The N-terminal stretch at 1 to 28 is a signal peptide; that stretch reads MAWLGIGMGRQIVPVLVFVAVLCSGVDA. A beta-D-glucoside is bound at residue Gln49. Asn103 carries N-linked (GlcNAc...) asparagine glycosylation. Residues His138 and 183-184 each bind a beta-D-glucoside; that span reads NE. Glu184 functions as the Proton donor in the catalytic mechanism. A disulfide bridge links Cys203 with Cys211. N-linked (GlcNAc...) asparagine glycosylation occurs at Asn263. A beta-D-glucoside is bound at residue Tyr327. Residue Asn352 is glycosylated (N-linked (GlcNAc...) asparagine). A beta-D-glucoside is bound at residue Glu398. Glu398 functions as the Nucleophile in the catalytic mechanism. An N-linked (GlcNAc...) asparagine glycan is attached at Asn406. A beta-D-glucoside contacts are provided by residues Trp447, 454–455, and Phe463; that span reads EW.

This sequence belongs to the glycosyl hydrolase 1 family.

The enzyme catalyses Hydrolysis of terminal, non-reducing beta-D-glucosyl residues with release of beta-D-glucose.. This Oryza sativa subsp. japonica (Rice) protein is Beta-glucosidase 29 (BGLU29).